The sequence spans 515 residues: N-acetylglucosamine-1-phosphodiester alpha-N-acetylglucosaminidase (515 aa).

The first 25 residues, 1–25, serve as a signal peptide directing secretion; that stretch reads MATSTGRWLLLRLALFGFLWEASGG. The propeptide at 26 to 49 is removed in mature form; sequence LDSGASRDDDLLLPYPRARARLPR. Residues 50-448 lie on the Lumenal side of the membrane; that stretch reads DCTRVRAGNR…AGELSFFTRT (399 aa). Intrachain disulfides connect Cys-115-Cys-148, Cys-132-Cys-323, Cys-307-Cys-314, Cys-362-Cys-373, and Cys-380-Cys-389. 3 N-linked (GlcNAc...) asparagine glycosylation sites follow: Asn-208, Asn-214, and Asn-296. The 33-residue stretch at 358-390 folds into the EGF-like domain; it reads DELDCGPSNCSQHGLCTETGCRCDAGWTGSNCS. 3 N-linked (GlcNAc...) asparagine glycosylation sites follow: Asn-366, Asn-388, and Asn-420. The chain crosses the membrane as a helical span at residues 449 to 469; that stretch reads AWLALTLALAFLLLISTAANL. The Cytoplasmic portion of the chain corresponds to 470–515; that stretch reads SLLLSRAERNRRLHGDYAYHPLQEMNGEPLAAEKEQPGGAHNPFKD. Residues 486-493 form a mediates the interaction with AP4M1 region; the sequence is YAYHPLQE. A Tyrosine-based internalization motif motif is present at residues 488-491; the sequence is YHPL. Residues 511-515 carry the NPF internalization motif motif; the sequence is NPFKD.

As to quaternary structure, homotetramer arranged as two disulfide-linked homodimers. Interacts with AP4M1. Post-translationally, the precursor is cleaved and activated in the trans-Golgi network by a furin endopeptidase. As to expression, isoform 2 may be brain-specific.

The protein localises to the golgi apparatus. It is found in the golgi stack membrane. Its subcellular location is the trans-Golgi network. The enzyme catalyses N(4)-[6-(N-acetyl-alpha-D-glucosaminyl-1-phospho)-alpha-D-mannosyl-(1-&gt;2)-alpha-D-mannosyl-(glycan)]-L-asparaginyl-[protein] + H2O = N(4)-[6-phospho-alpha-D-mannosyl-(1-&gt;2)-alpha-D-mannosyl-(glycan)]-L-asparaginyl-[protein] + N-acetyl-D-glucosamine + H(+). The protein operates within protein modification; protein glycosylation. In terms of biological role, catalyzes the second step in the formation of the mannose 6-phosphate targeting signal on lysosomal enzyme oligosaccharides by removing GlcNAc residues from GlcNAc-alpha-P-mannose moieties, which are formed in the first step. Also hydrolyzes UDP-GlcNAc, a sugar donor for Golgi N-acetylglucosaminyltransferases. The sequence is that of N-acetylglucosamine-1-phosphodiester alpha-N-acetylglucosaminidase (NAGPA) from Homo sapiens (Human).